A 538-amino-acid chain; its full sequence is GSY2-interacting protein PIG2 (538 aa).

Phosphoserine is present on residues Ser162, Ser196, Ser296, and Ser304. The 125-residue stretch at 384 to 508 (LNLSRGRPVF…NNDSANYKID (125 aa)) folds into the CBM21 domain.

Interacts with glycogen synthase 2 (GSY2); possibly also interacts with phosphatase 1 (GLC7). The protein is GSY2-interacting protein PIG2 (PIG2) of Saccharomyces cerevisiae (strain ATCC 204508 / S288c) (Baker's yeast).